A 275-amino-acid chain; its full sequence is Bis(5'-nucleosyl)-tetraphosphatase, symmetrical (275 aa).

It belongs to the Ap4A hydrolase family.

The enzyme catalyses P(1),P(4)-bis(5'-adenosyl) tetraphosphate + H2O = 2 ADP + 2 H(+). In terms of biological role, hydrolyzes diadenosine 5',5'''-P1,P4-tetraphosphate to yield ADP. The protein is Bis(5'-nucleosyl)-tetraphosphatase, symmetrical (apaH) of Aggregatibacter actinomycetemcomitans (Actinobacillus actinomycetemcomitans).